Consider the following 218-residue polypeptide: Protein-methionine-sulfoxide reductase heme-binding subunit MsrQ (218 aa).

Transmembrane regions (helical) follow at residues 14-34 (AVHA…WQVW), 60-80 (LLLI…AVLI), 86-106 (LGLY…WLDL), 121-141 (PYIT…ITST), and 155-175 (LHML…WLVK).

It belongs to the MsrQ family. In terms of assembly, heterodimer of a catalytic subunit (MsrP) and a heme-binding subunit (MsrQ). Requires FMN as cofactor. Heme b is required as a cofactor.

It is found in the cell inner membrane. Part of the MsrPQ system that repairs oxidized periplasmic proteins containing methionine sulfoxide residues (Met-O), using respiratory chain electrons. Thus protects these proteins from oxidative-stress damage caused by reactive species of oxygen and chlorine generated by the host defense mechanisms. MsrPQ is essential for the maintenance of envelope integrity under bleach stress, rescuing a wide series of structurally unrelated periplasmic proteins from methionine oxidation. MsrQ provides electrons for reduction to the reductase catalytic subunit MsrP, using the quinone pool of the respiratory chain. This is Protein-methionine-sulfoxide reductase heme-binding subunit MsrQ from Xanthomonas campestris pv. campestris (strain B100).